The primary structure comprises 359 residues: Nicotinate N-methyltransferase 1 (359 aa).

Asp226 lines the S-adenosyl-L-methionine pocket.

It belongs to the class I-like SAM-binding methyltransferase superfamily. Cation-independent O-methyltransferase family. As to expression, highly expressed in anthers, pistils, developing siliques, and developing seeds.

It localises to the cytoplasm. The protein resides in the cytosol. It catalyses the reaction nicotinate + S-adenosyl-L-methionine = N-methylnicotinate + S-adenosyl-L-homocysteine. In terms of biological role, involved in nicotinate detoxification in planta. Catalyzes the conversion of nicotinate to N-methylnicotinate, which is a detoxified form of endogenous nicotinate in planta. This Arabidopsis thaliana (Mouse-ear cress) protein is Nicotinate N-methyltransferase 1.